We begin with the raw amino-acid sequence, 231 residues long: 7-cyano-7-deazaguanine synthase (231 aa).

8–18 contributes to the ATP binding site; it reads FSGGQDSTTCL. Positions 188, 197, 200, and 203 each coordinate Zn(2+).

Belongs to the QueC family. It depends on Zn(2+) as a cofactor.

It carries out the reaction 7-carboxy-7-deazaguanine + NH4(+) + ATP = 7-cyano-7-deazaguanine + ADP + phosphate + H2O + H(+). It participates in purine metabolism; 7-cyano-7-deazaguanine biosynthesis. Catalyzes the ATP-dependent conversion of 7-carboxy-7-deazaguanine (CDG) to 7-cyano-7-deazaguanine (preQ(0)). In Cronobacter sakazakii (strain ATCC BAA-894) (Enterobacter sakazakii), this protein is 7-cyano-7-deazaguanine synthase.